The chain runs to 95 residues: UPF0235 protein Sama_2480 (95 aa).

This sequence belongs to the UPF0235 family.

This Shewanella amazonensis (strain ATCC BAA-1098 / SB2B) protein is UPF0235 protein Sama_2480.